Consider the following 292-residue polypeptide: NAC domain-containing protein 105 (292 aa).

In terms of domain architecture, NAC spans 12–162; the sequence is IPPGFRFHPT…GWVVCRAFKK (151 aa). A DNA-binding region spans residues 112–168; the sequence is IGMRKTLVFYRGRAPNGQKSDWIIHEYYSLESHQNSPPQEEGWVVCRAFKKRTTIPT. The span at 237–259 shows a compositional bias: polar residues; it reads LPQLESPSLPSEITPHSTTFSEN. The disordered stretch occupies residues 237-269; sequence LPQLESPSLPSEITPHSTTFSENSSRKDDMSSE. Residues 260–269 are compositionally biased toward basic and acidic residues; sequence SSRKDDMSSE.

This sequence belongs to the plant vascular related NAC-domain protein family. Interacts with NAC030/VND7. As to expression, detected in root protoxylem and metaxylem poles and in vessels of protoxylems, outermost metaxylems, inner metaxylems, shoots and hypocotyls. Expressed in roots, hypocotyls, cotyledons and leaves. Present in developing xylems. Present in root developing xylems. Specifically expressed in vessels but not in interfascicular fibers in stems.

Its subcellular location is the nucleus. In terms of biological role, transcription activator that binds to the secondary wall NAC binding element (SNBE), 5'-(T/A)NN(C/T)(T/C/G)TNNNNNNNA(A/C)GN(A/C/T)(A/T)-3', in the promoter of target genes. Involved in xylem formation by promoting the expression of secondary wall-associated transcription factors and of genes involved in secondary wall biosynthesis and programmed cell death, genes driven by the secondary wall NAC binding element (SNBE). Triggers thickening of secondary walls. This chain is NAC domain-containing protein 105, found in Arabidopsis thaliana (Mouse-ear cress).